Here is a 913-residue protein sequence, read N- to C-terminus: DNA polymerase (913 aa).

Residues 182–401 (PLIIASWDIE…AYARKDTDLP (220 aa)) form a contains conserved residues essential for 3' -&gt; 5' exonuclease activities region.

The protein belongs to the DNA polymerase type-B family.

The enzyme catalyses DNA(n) + a 2'-deoxyribonucleoside 5'-triphosphate = DNA(n+1) + diphosphate. In terms of biological role, in addition to polymerase activity, this DNA polymerase potentially exhibits 3' to 5' exonuclease activity. The sequence is that of DNA polymerase (DPO) from Chlorella (PBCV-NY2A).